The following is a 164-amino-acid chain: MTQIDYTRAAKYFLLQDVWQGFKLGLKYFFAPKATINYPHEKGPLSPRFRGEHALRRYPNGEERCIACKLCEAVCPAQAITIDAEPREDGSRRTTRYDIDMTKCIYCGFCQEACPVDAIVEGPNFEFATETREELFYDKDKLLANGERWEAEIARNLELDAPYR.

4Fe-4S ferredoxin-type domains follow at residues 55 to 85 and 95 to 124; these read LRRY…IDAE and TRYD…EGPN. [4Fe-4S] cluster-binding residues include Cys65, Cys68, Cys71, Cys75, Cys104, Cys107, Cys110, and Cys114.

This sequence belongs to the complex I 23 kDa subunit family. In terms of assembly, NDH-1 is composed of 14 different subunits. Subunits NuoA, H, J, K, L, M, N constitute the membrane sector of the complex. [4Fe-4S] cluster is required as a cofactor.

The protein localises to the cell inner membrane. The catalysed reaction is a quinone + NADH + 5 H(+)(in) = a quinol + NAD(+) + 4 H(+)(out). Functionally, NDH-1 shuttles electrons from NADH, via FMN and iron-sulfur (Fe-S) centers, to quinones in the respiratory chain. The immediate electron acceptor for the enzyme in this species is believed to be ubiquinone. Couples the redox reaction to proton translocation (for every two electrons transferred, four hydrogen ions are translocated across the cytoplasmic membrane), and thus conserves the redox energy in a proton gradient. The polypeptide is NADH-quinone oxidoreductase subunit I (Ruegeria sp. (strain TM1040) (Silicibacter sp.)).